Reading from the N-terminus, the 426-residue chain is Aspartate aminotransferase, mitochondrial (426 aa).

The N-terminal 29 residues, 1-29 (MIRSARLISNIKFGQKNIRQFSTNTNWWA), are a transit peptide targeting the mitochondrion. The substrate site is built by Gly-60, Trp-156, and Asn-209. At Lys-273 the chain carries N6-(pyridoxal phosphate)lysine. Residue Arg-401 participates in substrate binding.

This sequence belongs to the class-I pyridoxal-phosphate-dependent aminotransferase family. In terms of assembly, homodimer. Pyridoxal 5'-phosphate is required as a cofactor.

Its subcellular location is the mitochondrion matrix. It is found in the cell membrane. The enzyme catalyses L-aspartate + 2-oxoglutarate = oxaloacetate + L-glutamate. The catalysed reaction is L-kynurenine + 2-oxoglutarate = kynurenate + L-glutamate + H2O. Plays a key role in amino acid metabolism. Important for metabolite exchange between mitochondria and cytosol. This Dictyostelium discoideum (Social amoeba) protein is Aspartate aminotransferase, mitochondrial (aatA).